We begin with the raw amino-acid sequence, 23 residues long: Aldehyde dehydrogenase (23 aa).

It belongs to the aldehyde dehydrogenase family.

The catalysed reaction is an aldehyde + NAD(+) + H2O = a carboxylate + NADH + 2 H(+). This Moraxella sp. (strain TAE123) protein is Aldehyde dehydrogenase.